The chain runs to 64 residues: Large ribosomal subunit protein bL28 (64 aa).

This sequence belongs to the bacterial ribosomal protein bL28 family.

In Persephonella marina (strain DSM 14350 / EX-H1), this protein is Large ribosomal subunit protein bL28.